The chain runs to 317 residues: Acetyl-coenzyme A carboxylase carboxyl transferase subunit alpha (317 aa).

Residues 40-293 enclose the CoA carboxyltransferase C-terminal domain; that stretch reads LEKRSADALK…GDIIAASLRS (254 aa).

This sequence belongs to the AccA family. Acetyl-CoA carboxylase is a heterohexamer composed of biotin carboxyl carrier protein (AccB), biotin carboxylase (AccC) and two subunits each of ACCase subunit alpha (AccA) and ACCase subunit beta (AccD).

The protein localises to the cytoplasm. It carries out the reaction N(6)-carboxybiotinyl-L-lysyl-[protein] + acetyl-CoA = N(6)-biotinyl-L-lysyl-[protein] + malonyl-CoA. It participates in lipid metabolism; malonyl-CoA biosynthesis; malonyl-CoA from acetyl-CoA: step 1/1. Component of the acetyl coenzyme A carboxylase (ACC) complex. First, biotin carboxylase catalyzes the carboxylation of biotin on its carrier protein (BCCP) and then the CO(2) group is transferred by the carboxyltransferase to acetyl-CoA to form malonyl-CoA. In Brucella melitensis biotype 2 (strain ATCC 23457), this protein is Acetyl-coenzyme A carboxylase carboxyl transferase subunit alpha.